The chain runs to 311 residues: Probable mitochondrial phosphate carrier protein (311 aa).

Over 1-23 the chain is Mitochondrial intermembrane; sequence MSTPLIPPAPPKKTLQLYTPQYY. Solcar repeat units lie at residues 21-105, 118-203, and 219-303; these read QYYG…FKHK, YRTS…IVEA, and EKIG…FKIM. A helical transmembrane segment spans residues 24-44; that stretch reads GLCTLGGLLACGTTHSAITPL. The Mitochondrial matrix segment spans residues 45–67; the sequence is DLIKCRKQVNPNIYPGNIAGFKT. The helical transmembrane segment at 68–88 threads the bilayer; it reads ILSKEGLRGLYTGGMPTLIGY. Over 89 to 120 the chain is Mitochondrial intermembrane; sequence SLQGCGKYGFYELFKHKYSTLVGAQKAHEYRT. The chain crosses the membrane as a helical span at residues 121–141; it reads SIYLAASASAELLADIMLCPM. Topologically, residues 142 to 171 are mitochondrial matrix; that stretch reads EAIKVRVQTSNPRFANTTREAWSKIVTNEG. A helical membrane pass occupies residues 172-192; it reads FGTLYRGLAPLWFRQIPYTMM. The Mitochondrial intermembrane portion of the chain corresponds to 193 to 220; that stretch reads KFASFERIVEALYTYIGKPKNMYSKAEK. The helical transmembrane segment at 221–241 threads the bilayer; that stretch reads IGISFAGGYMAGVLCAIISHP. The Mitochondrial matrix portion of the chain corresponds to 242–269; the sequence is ADVMVSKLNSNKKAGEGAGAAAARIYKE. Residues 270–290 form a helical membrane-spanning segment; the sequence is IGFSGLWNGLGVRIVMIGTLT. Residues 291 to 311 are Mitochondrial intermembrane-facing; that stretch reads GAQWLIYDSFKIMCGFPATGA.

This sequence belongs to the mitochondrial carrier (TC 2.A.29) family.

The protein resides in the mitochondrion inner membrane. In terms of biological role, transport of phosphate groups from the cytosol to the mitochondrial matrix. This chain is Probable mitochondrial phosphate carrier protein, found in Schizosaccharomyces pombe (strain 972 / ATCC 24843) (Fission yeast).